The following is a 267-amino-acid chain: Undecaprenyl-diphosphatase (267 aa).

The next 8 helical transmembrane spans lie at 1–21 (MSYF…FLPI), 39–59 (QGLA…VIYF), 83–103 (AKLA…GLLM), 111–131 (LRSA…LWWV), 144–164 (TGWK…IPGT), 189–209 (FLMS…KLVT), 218–238 (FLLT…HFFL), and 245–265 (GMTP…AFLL).

It belongs to the UppP family.

It is found in the cell inner membrane. The enzyme catalyses di-trans,octa-cis-undecaprenyl diphosphate + H2O = di-trans,octa-cis-undecaprenyl phosphate + phosphate + H(+). Its function is as follows. Catalyzes the dephosphorylation of undecaprenyl diphosphate (UPP). Confers resistance to bacitracin. The sequence is that of Undecaprenyl-diphosphatase from Vibrio parahaemolyticus serotype O3:K6 (strain RIMD 2210633).